Reading from the N-terminus, the 80-residue chain is ATP synthase F(1) complex subunit delta, mitochondrial (80 aa).

Residues 1–22 constitute a mitochondrion transit peptide; sequence MLPATLLRXSGLGRVVRQARAY.

Belongs to the ATPase epsilon chain family. Component of the ATP synthase complex composed at least of ATP5F1A/subunit alpha, ATP5F1B/subunit beta, ATP5MC1/subunit c (homooctomer), MT-ATP6/subunit a, MT-ATP8/subunit 8, ATP5ME/subunit e, ATP5MF/subunit f, ATP5MG/subunit g, ATP5MK/subunit k, ATP5MJ/subunit j, ATP5F1C/subunit gamma, ATP5F1D/subunit delta, ATP5F1E/subunit epsilon, ATP5PF/subunit F6, ATP5PB/subunit b, ATP5PD/subunit d, ATP5PO/subunit OSCP. ATP synthase complex consists of a soluble F(1) head domain (subunits alpha(3) and beta(3)) - the catalytic core - and a membrane F(0) domain - the membrane proton channel (subunits c, a, 8, e, f, g, k and j). These two domains are linked by a central stalk (subunits gamma, delta, and epsilon) rotating inside the F1 region and a stationary peripheral stalk (subunits F6, b, d, and OSCP). Component of a complex composed at least by ATPIF1, ATP5F1A, ATP5F1B, ATP5F1C AND ATP5F1E.

The protein resides in the mitochondrion. Its subcellular location is the mitochondrion inner membrane. Its function is as follows. Subunit delta, of the mitochondrial membrane ATP synthase complex (F(1)F(0) ATP synthase or Complex V) that produces ATP from ADP in the presence of a proton gradient across the membrane which is generated by electron transport complexes of the respiratory chain. ATP synthase complex consist of a soluble F(1) head domain - the catalytic core - and a membrane F(1) domain - the membrane proton channel. These two domains are linked by a central stalk rotating inside the F(1) region and a stationary peripheral stalk. During catalysis, ATP synthesis in the catalytic domain of F(1) is coupled via a rotary mechanism of the central stalk subunits to proton translocation. In vivo, can only synthesize ATP although its ATP hydrolase activity can be activated artificially in vitro. With the central stalk subunit gamma, is essential for the biogenesis of F(1) catalytic part of the ATP synthase complex namely in the formation of F1 assembly intermediate. This Sus scrofa (Pig) protein is ATP synthase F(1) complex subunit delta, mitochondrial.